A 474-amino-acid polypeptide reads, in one-letter code: ATP synthase subunit beta (474 aa).

153 to 160 (GGAGVGKT) provides a ligand contact to ATP.

Belongs to the ATPase alpha/beta chains family. As to quaternary structure, F-type ATPases have 2 components, CF(1) - the catalytic core - and CF(0) - the membrane proton channel. CF(1) has five subunits: alpha(3), beta(3), gamma(1), delta(1), epsilon(1). CF(0) has three main subunits: a(1), b(2) and c(9-12). The alpha and beta chains form an alternating ring which encloses part of the gamma chain. CF(1) is attached to CF(0) by a central stalk formed by the gamma and epsilon chains, while a peripheral stalk is formed by the delta and b chains.

The protein localises to the cell inner membrane. It catalyses the reaction ATP + H2O + 4 H(+)(in) = ADP + phosphate + 5 H(+)(out). In terms of biological role, produces ATP from ADP in the presence of a proton gradient across the membrane. The catalytic sites are hosted primarily by the beta subunits. The sequence is that of ATP synthase subunit beta from Rickettsia prowazekii (strain Madrid E).